The chain runs to 126 residues: Small ribosomal subunit protein uS12 (126 aa).

A disordered region spans residues 1–26 (MPTINQLVRKGRASETTKSKSPALQD). 3-methylthioaspartic acid is present on Asp89. The tract at residues 103-126 (DTQGVKDRKQARSKYGAKRAKAGK) is disordered. Residues 113 to 126 (ARSKYGAKRAKAGK) show a composition bias toward basic residues.

Belongs to the universal ribosomal protein uS12 family. Part of the 30S ribosomal subunit. Contacts proteins S8 and S17. May interact with IF1 in the 30S initiation complex.

Its function is as follows. With S4 and S5 plays an important role in translational accuracy. In terms of biological role, interacts with and stabilizes bases of the 16S rRNA that are involved in tRNA selection in the A site and with the mRNA backbone. Located at the interface of the 30S and 50S subunits, it traverses the body of the 30S subunit contacting proteins on the other side and probably holding the rRNA structure together. The combined cluster of proteins S8, S12 and S17 appears to hold together the shoulder and platform of the 30S subunit. This chain is Small ribosomal subunit protein uS12, found in Paraburkholderia xenovorans (strain LB400).